The chain runs to 929 residues: Pyruvate dehydrogenase E1 component (929 aa).

Lys-375 participates in a covalent cross-link: Isoglutamyl lysine isopeptide (Lys-Gln) (interchain with Q-Cter in protein Pup).

As to quaternary structure, homodimer. Part of the PDH complex, consisting of multiple copies of AceE (E1), DlaT (E2) and Lpd (E3). It depends on Mg(2+) as a cofactor. Thiamine diphosphate is required as a cofactor.

It catalyses the reaction N(6)-[(R)-lipoyl]-L-lysyl-[protein] + pyruvate + H(+) = N(6)-[(R)-S(8)-acetyldihydrolipoyl]-L-lysyl-[protein] + CO2. Component of the pyruvate dehydrogenase (PDH) complex, that catalyzes the overall conversion of pyruvate to acetyl-CoA and CO(2). AceE has reductase activity with pyruvate but does not react with 2-oxoglutarate. In Mycolicibacterium smegmatis (strain ATCC 700084 / mc(2)155) (Mycobacterium smegmatis), this protein is Pyruvate dehydrogenase E1 component (aceE).